Reading from the N-terminus, the 307-residue chain is Methionyl-tRNA formyltransferase (307 aa).

108-111 (SLLP) provides a ligand contact to (6S)-5,6,7,8-tetrahydrofolate.

The protein belongs to the Fmt family.

It carries out the reaction L-methionyl-tRNA(fMet) + (6R)-10-formyltetrahydrofolate = N-formyl-L-methionyl-tRNA(fMet) + (6S)-5,6,7,8-tetrahydrofolate + H(+). In terms of biological role, attaches a formyl group to the free amino group of methionyl-tRNA(fMet). The formyl group appears to play a dual role in the initiator identity of N-formylmethionyl-tRNA by promoting its recognition by IF2 and preventing the misappropriation of this tRNA by the elongation apparatus. This is Methionyl-tRNA formyltransferase from Xylella fastidiosa (strain 9a5c).